The sequence spans 206 residues: LexA repressor (206 aa).

The H-T-H motif DNA-binding region spans 29-49 (VREICEAVGLRSTSTVHGHLA). Active-site for autocatalytic cleavage activity residues include Ser130 and Lys167.

It belongs to the peptidase S24 family. Homodimer.

The enzyme catalyses Hydrolysis of Ala-|-Gly bond in repressor LexA.. Its function is as follows. Represses a number of genes involved in the response to DNA damage (SOS response), including recA and lexA. In the presence of single-stranded DNA, RecA interacts with LexA causing an autocatalytic cleavage which disrupts the DNA-binding part of LexA, leading to derepression of the SOS regulon and eventually DNA repair. The protein is LexA repressor of Alkaliphilus oremlandii (strain OhILAs) (Clostridium oremlandii (strain OhILAs)).